Reading from the N-terminus, the 872-residue chain is Alanine--tRNA ligase (872 aa).

Positions 563, 567, 665, and 669 each coordinate Zn(2+).

This sequence belongs to the class-II aminoacyl-tRNA synthetase family. Requires Zn(2+) as cofactor.

The protein resides in the cytoplasm. It carries out the reaction tRNA(Ala) + L-alanine + ATP = L-alanyl-tRNA(Ala) + AMP + diphosphate. Functionally, catalyzes the attachment of alanine to tRNA(Ala) in a two-step reaction: alanine is first activated by ATP to form Ala-AMP and then transferred to the acceptor end of tRNA(Ala). Also edits incorrectly charged Ser-tRNA(Ala) and Gly-tRNA(Ala) via its editing domain. The sequence is that of Alanine--tRNA ligase from Bacteroides fragilis (strain YCH46).